A 298-amino-acid polypeptide reads, in one-letter code: NAD-dependent L-serine dehydrogenase (298 aa).

Residues 2-31 (KQIA…NVFD), 65-66 (LP), Pro-66, and Thr-96 contribute to the NAD(+) site. Residue Lys-171 is part of the active site. Lys-246 lines the NAD(+) pocket.

This sequence belongs to the HIBADH-related family. Homotetramer, dimer of dimers.

The enzyme catalyses L-serine + NAD(+) = aminoacetaldehyde + CO2 + NADH. Its pathway is amino-acid degradation. NAD-dependent L-serine dehydrogenase that catalyzes the oxidation of L-serine and methyl-L-serine and is possibly involved in serine catabolism. Has low activity toward beta-hydroxyisobutyrate. This is NAD-dependent L-serine dehydrogenase from Pseudomonas aeruginosa (strain ATCC 15692 / DSM 22644 / CIP 104116 / JCM 14847 / LMG 12228 / 1C / PRS 101 / PAO1).